A 619-amino-acid chain; its full sequence is Teichoic acid poly(ribitol-phosphate) polymerase (619 aa).

It belongs to the CDP-glycerol glycerophosphotransferase family.

It is found in the cell membrane. It catalyses the reaction 4-O-[1-D-ribitylphospho-(2R)-1-glycerylphospho]-N-acetyl-beta-D-mannosaminyl-(1-&gt;4)-N-acetyl-alpha-D-glucosaminyl di-trans,octa-cis-undecaprenyl diphosphate + n CDP-L-ribitol = 4-O-[(D-ribitylphospho)(n)-D-ribitylphospho-(2R)-glycerylphospho]-N-acetyl-beta-D-mannosaminyl-(1-&gt;4)-N-acetyl-alpha-D-glucosaminyl di-trans,octa-cis-undecaprenyl diphosphate + n CMP + n H(+). The protein operates within cell wall biogenesis; poly(ribitol phosphate) teichoic acid biosynthesis. Its function is as follows. Responsible for the polymerization of the main chain of the major teichoic acid by sequential transfer of ribitol phosphate units from CDP-ribitol to the glycerol phosphate attached to the disaccharide linkage unit. Synthesizes polymers of up to 40 ribitol phosphate units in length. This Bacillus spizizenii (strain ATCC 23059 / NRRL B-14472 / W23) (Bacillus subtilis subsp. spizizenii) protein is Teichoic acid poly(ribitol-phosphate) polymerase (tarL).